The following is a 781-amino-acid chain: Molybdenum cofactor sulfurase (781 aa).

Lys246 is subject to N6-(pyridoxal phosphate)lysine. The active site involves Cys413. In terms of domain architecture, MOSC spans 635–781 (LRLLRQSGQR…MTCGDVVLVE (147 aa)). Ser734 carries the phosphoserine modification.

The protein belongs to the class-V pyridoxal-phosphate-dependent aminotransferase family. MOCOS subfamily. The cofactor is pyridoxal 5'-phosphate.

It carries out the reaction Mo-molybdopterin + L-cysteine + AH2 = thio-Mo-molybdopterin + L-alanine + A + H2O. It participates in cofactor biosynthesis; molybdopterin biosynthesis. In terms of biological role, sulfurates the molybdenum cofactor. Sulfation of molybdenum is essential for xanthine dehydrogenase (XDH) and aldehyde oxidase (ADO) enzymes in which molybdenum cofactor is liganded by 1 oxygen and 1 sulfur atom in active form. This chain is Molybdenum cofactor sulfurase, found in Drosophila melanogaster (Fruit fly).